Here is a 295-residue protein sequence, read N- to C-terminus: 33 kDa chaperonin (295 aa).

2 disulfides stabilise this stretch: cysteine 237-cysteine 239 and cysteine 270-cysteine 273.

This sequence belongs to the HSP33 family. In terms of processing, under oxidizing conditions two disulfide bonds are formed involving the reactive cysteines. Under reducing conditions zinc is bound to the reactive cysteines and the protein is inactive.

Its subcellular location is the cytoplasm. Redox regulated molecular chaperone. Protects both thermally unfolding and oxidatively damaged proteins from irreversible aggregation. Plays an important role in the bacterial defense system toward oxidative stress. The protein is 33 kDa chaperonin of Shouchella clausii (strain KSM-K16) (Alkalihalobacillus clausii).